Consider the following 1057-residue polypeptide: Carbamoyl phosphate synthase large chain (1057 aa).

Residues M1 to E401 are carboxyphosphate synthetic domain. ATP-binding residues include R129, R169, G175, G176, K208, I210, E215, G241, I242, H243, Q284, and E298. In terms of domain architecture, ATP-grasp 1 spans R133 to V327. Q284, E298, and N300 together coordinate Mg(2+). Mn(2+) is bound by residues Q284, E298, and N300. The interval Y402–S546 is oligomerization domain. The interval I547–G929 is carbamoyl phosphate synthetic domain. The ATP-grasp 2 domain occupies E671–M861. ATP is bound by residues R707, R746, L748, E752, G777, V778, H779, S780, Q820, and E832. The Mg(2+) site is built by Q820, E832, and N834. Residues Q820, E832, and N834 each contribute to the Mn(2+) site. The MGS-like domain maps to F930–V1057. An allosteric domain region spans residues F930 to V1057.

The protein belongs to the CarB family. In terms of assembly, composed of two chains; the small (or glutamine) chain promotes the hydrolysis of glutamine to ammonia, which is used by the large (or ammonia) chain to synthesize carbamoyl phosphate. Tetramer of heterodimers (alpha,beta)4. Requires Mg(2+) as cofactor. The cofactor is Mn(2+).

It catalyses the reaction hydrogencarbonate + L-glutamine + 2 ATP + H2O = carbamoyl phosphate + L-glutamate + 2 ADP + phosphate + 2 H(+). It carries out the reaction hydrogencarbonate + NH4(+) + 2 ATP = carbamoyl phosphate + 2 ADP + phosphate + 2 H(+). It functions in the pathway amino-acid biosynthesis; L-arginine biosynthesis; carbamoyl phosphate from bicarbonate: step 1/1. Its pathway is pyrimidine metabolism; UMP biosynthesis via de novo pathway; (S)-dihydroorotate from bicarbonate: step 1/3. Functionally, large subunit of the glutamine-dependent carbamoyl phosphate synthetase (CPSase). CPSase catalyzes the formation of carbamoyl phosphate from the ammonia moiety of glutamine, carbonate, and phosphate donated by ATP, constituting the first step of 2 biosynthetic pathways, one leading to arginine and/or urea and the other to pyrimidine nucleotides. The large subunit (synthetase) binds the substrates ammonia (free or transferred from glutamine from the small subunit), hydrogencarbonate and ATP and carries out an ATP-coupled ligase reaction, activating hydrogencarbonate by forming carboxy phosphate which reacts with ammonia to form carbamoyl phosphate. This chain is Carbamoyl phosphate synthase large chain, found in Staphylococcus epidermidis (strain ATCC 35984 / DSM 28319 / BCRC 17069 / CCUG 31568 / BM 3577 / RP62A).